The chain runs to 248 residues: Triosephosphate isomerase (248 aa).

9-11 (NWK) is a binding site for substrate. His94 serves as the catalytic Electrophile. The active-site Proton acceptor is the Glu166. Residues Gly172, Ser212, and 233–234 (GG) contribute to the substrate site.

This sequence belongs to the triosephosphate isomerase family. In terms of assembly, homodimer.

The protein resides in the cytoplasm. The enzyme catalyses D-glyceraldehyde 3-phosphate = dihydroxyacetone phosphate. Its pathway is carbohydrate biosynthesis; gluconeogenesis. It functions in the pathway carbohydrate degradation; glycolysis; D-glyceraldehyde 3-phosphate from glycerone phosphate: step 1/1. Functionally, involved in the gluconeogenesis. Catalyzes stereospecifically the conversion of dihydroxyacetone phosphate (DHAP) to D-glyceraldehyde-3-phosphate (G3P). The sequence is that of Triosephosphate isomerase from Clostridium perfringens (strain ATCC 13124 / DSM 756 / JCM 1290 / NCIMB 6125 / NCTC 8237 / Type A).